The following is a 381-amino-acid chain: Alkanesulfonate monooxygenase (381 aa).

Belongs to the SsuD family. Homotetramer.

The catalysed reaction is an alkanesulfonate + FMNH2 + O2 = an aldehyde + FMN + sulfite + H2O + 2 H(+). Functionally, catalyzes the desulfonation of aliphatic sulfonates. The polypeptide is Alkanesulfonate monooxygenase (Shigella flexneri serotype 5b (strain 8401)).